A 570-amino-acid chain; its full sequence is Sulfite reductase [NADPH] hemoprotein beta-component (570 aa).

Residues Cys434, Cys440, Cys479, and Cys483 each coordinate [4Fe-4S] cluster. Position 483 (Cys483) interacts with siroheme.

Belongs to the nitrite and sulfite reductase 4Fe-4S domain family. In terms of assembly, alpha(8)-beta(8). The alpha component is a flavoprotein, the beta component is a hemoprotein. Siroheme serves as cofactor. The cofactor is [4Fe-4S] cluster.

It carries out the reaction hydrogen sulfide + 3 NADP(+) + 3 H2O = sulfite + 3 NADPH + 4 H(+). It participates in sulfur metabolism; hydrogen sulfide biosynthesis; hydrogen sulfide from sulfite (NADPH route): step 1/1. In terms of biological role, component of the sulfite reductase complex that catalyzes the 6-electron reduction of sulfite to sulfide. This is one of several activities required for the biosynthesis of L-cysteine from sulfate. The protein is Sulfite reductase [NADPH] hemoprotein beta-component of Escherichia coli O9:H4 (strain HS).